Here is a 385-residue protein sequence, read N- to C-terminus: Multicilin (385 aa).

Residues Met-1 to Ser-130 form a necessary and sufficient for its degradation during the cell cycle region. A disordered region spans residues Ser-86 to Ala-111. Residues Ser-131 to Ser-385 are necessary and sufficient for proper nuclear localization. Positions Pro-173–Gln-245 are necessary and sufficient for interaction with GMNN and sufficient for homodimerization. The stretch at Glu-179–Leu-227 forms a coiled coil. Positions Ala-294 to Leu-319 are disordered.

This sequence belongs to the geminin family. In terms of assembly, heterodimer (via coiled-coil domain) with GMNN (via coiled-coil domain); targets GMNN to the nucleus. Can form homodimers (in vitro, via coiled-coil domain), but these are much less stable than the heterodimer formed with GMNN.

The protein resides in the nucleus. In terms of biological role, transcription regulator specifically required for multiciliate cell differentiation. Acts in a multiprotein complex containing E2F4 and E2F5 that binds and activates genes required for centriole biogenesis. Required for the deuterosome-mediated acentriolar pathway. Plays a role in mitotic cell cycle progression by promoting cell cycle exit. Modulates GMNN activity by reducing its affinity for CDT1. The polypeptide is Multicilin (Homo sapiens (Human)).